Here is a 653-residue protein sequence, read N- to C-terminus: Cytidine monophosphate-N-acetylneuraminic acid hydroxylase (653 aa).

A Rieske domain is found at 11-120 (LSPEETSELK…PEYNEDGSLD (110 aa)). [2Fe-2S] cluster is bound by residues Cys62, His64, Cys83, and His86. Positions 596–622 (WNPSQATPAVEAKDPSSDSKDSATKPG) are disordered. Residues 606–618 (EAKDPSSDSKDSA) are compositionally biased toward basic and acidic residues. The chain crosses the membrane as a helical span at residues 630 to 647 (LLRPLGIVVALVGVGVAI).

The protein belongs to the CMP-Neu5Ac hydroxylase family. It depends on [2Fe-2S] cluster as a cofactor.

Its subcellular location is the membrane. The catalysed reaction is CMP-N-acetyl-beta-neuraminate + 2 Fe(II)-[cytochrome b5] + O2 + 2 H(+) = CMP-N-glycoloyl-beta-neuraminate + 2 Fe(III)-[cytochrome b5] + H2O. It participates in amino-sugar metabolism; N-acetylneuraminate metabolism. Sialic acids are components of carbohydrate chains of glycoconjugates and are involved in cell-cell recognition and cell-pathogen interactions. Catalyzes the conversion of CMP-N-acetylneuraminic acid (CMP-Neu5Ac) into its hydroxylated derivative CMP-N-glycolylneuraminic acid (CMP-Neu5Gc), a sialic acid abundantly expressed at the surface of many cells. The protein is Cytidine monophosphate-N-acetylneuraminic acid hydroxylase (cnh) of Asterias rubens (Common European starfish).